A 314-amino-acid chain; its full sequence is Large ribosomal subunit protein uL10 (314 aa).

The segment at 281-314 (GSTQETPEEKKEEAKKEEKSPDESISEGLGALFQ) is disordered. Residues 287–302 (PEEKKEEAKKEEKSPD) are compositionally biased toward basic and acidic residues.

The protein belongs to the universal ribosomal protein uL10 family. In terms of assembly, part of the 50S ribosomal subunit. Forms part of the ribosomal stalk which helps the ribosome interact with GTP-bound translation factors. Forms a heptameric L10(L12)2(L12)2(L12)2 complex, where L10 forms an elongated spine to which the L12 dimers bind in a sequential fashion.

Functionally, forms part of the ribosomal stalk, playing a central role in the interaction of the ribosome with GTP-bound translation factors. This Thermoplasma acidophilum (strain ATCC 25905 / DSM 1728 / JCM 9062 / NBRC 15155 / AMRC-C165) protein is Large ribosomal subunit protein uL10.